Consider the following 416-residue polypeptide: UDP-N-acetylmuramoylalanine--D-glutamate ligase (416 aa).

108-114 (GTTGKTT) is a binding site for ATP.

This sequence belongs to the MurCDEF family.

It is found in the cytoplasm. It carries out the reaction UDP-N-acetyl-alpha-D-muramoyl-L-alanine + D-glutamate + ATP = UDP-N-acetyl-alpha-D-muramoyl-L-alanyl-D-glutamate + ADP + phosphate + H(+). It participates in cell wall biogenesis; peptidoglycan biosynthesis. In terms of biological role, cell wall formation. Catalyzes the addition of glutamate to the nucleotide precursor UDP-N-acetylmuramoyl-L-alanine (UMA). This chain is UDP-N-acetylmuramoylalanine--D-glutamate ligase, found in Chlamydia trachomatis serovar A (strain ATCC VR-571B / DSM 19440 / HAR-13).